The primary structure comprises 477 residues: UDP-N-acetylmuramate--L-alanine ligase (477 aa).

122–128 (GTHGKTT) serves as a coordination point for ATP.

The protein belongs to the MurCDEF family.

It is found in the cytoplasm. The catalysed reaction is UDP-N-acetyl-alpha-D-muramate + L-alanine + ATP = UDP-N-acetyl-alpha-D-muramoyl-L-alanine + ADP + phosphate + H(+). Its pathway is cell wall biogenesis; peptidoglycan biosynthesis. In terms of biological role, cell wall formation. The protein is UDP-N-acetylmuramate--L-alanine ligase of Xanthomonas axonopodis pv. citri (strain 306).